Consider the following 111-residue polypeptide: Ribosome-binding factor A (111 aa).

The protein belongs to the RbfA family. Monomer. Binds 30S ribosomal subunits, but not 50S ribosomal subunits or 70S ribosomes.

It is found in the cytoplasm. Its function is as follows. One of several proteins that assist in the late maturation steps of the functional core of the 30S ribosomal subunit. Associates with free 30S ribosomal subunits (but not with 30S subunits that are part of 70S ribosomes or polysomes). Required for efficient processing of 16S rRNA. May interact with the 5'-terminal helix region of 16S rRNA. This is Ribosome-binding factor A from Helicobacter pylori (strain G27).